Consider the following 86-residue polypeptide: Small ribosomal subunit protein bS20 (86 aa).

The interval 1–23 is disordered; that stretch reads MANIKSSKKDSIKSRKKKKLNAS.

This sequence belongs to the bacterial ribosomal protein bS20 family.

Its function is as follows. Binds directly to 16S ribosomal RNA. In Buchnera aphidicola subsp. Baizongia pistaciae (strain Bp), this protein is Small ribosomal subunit protein bS20.